The chain runs to 217 residues: Thiamine-phosphate synthase (217 aa).

Residues 39 to 43 (QYRDK) and asparagine 71 each bind 4-amino-2-methyl-5-(diphosphooxymethyl)pyrimidine. Mg(2+) is bound by residues aspartate 72 and aspartate 91. A 4-amino-2-methyl-5-(diphosphooxymethyl)pyrimidine-binding site is contributed by threonine 110. 137-139 (SHT) is a binding site for 2-[(2R,5Z)-2-carboxy-4-methylthiazol-5(2H)-ylidene]ethyl phosphate. Lysine 140 is a 4-amino-2-methyl-5-(diphosphooxymethyl)pyrimidine binding site. Glycine 167 contacts 2-[(2R,5Z)-2-carboxy-4-methylthiazol-5(2H)-ylidene]ethyl phosphate.

The protein belongs to the thiamine-phosphate synthase family. The cofactor is Mg(2+).

It catalyses the reaction 2-[(2R,5Z)-2-carboxy-4-methylthiazol-5(2H)-ylidene]ethyl phosphate + 4-amino-2-methyl-5-(diphosphooxymethyl)pyrimidine + 2 H(+) = thiamine phosphate + CO2 + diphosphate. The catalysed reaction is 2-(2-carboxy-4-methylthiazol-5-yl)ethyl phosphate + 4-amino-2-methyl-5-(diphosphooxymethyl)pyrimidine + 2 H(+) = thiamine phosphate + CO2 + diphosphate. The enzyme catalyses 4-methyl-5-(2-phosphooxyethyl)-thiazole + 4-amino-2-methyl-5-(diphosphooxymethyl)pyrimidine + H(+) = thiamine phosphate + diphosphate. Its pathway is cofactor biosynthesis; thiamine diphosphate biosynthesis; thiamine phosphate from 4-amino-2-methyl-5-diphosphomethylpyrimidine and 4-methyl-5-(2-phosphoethyl)-thiazole: step 1/1. Functionally, condenses 4-methyl-5-(beta-hydroxyethyl)thiazole monophosphate (THZ-P) and 2-methyl-4-amino-5-hydroxymethyl pyrimidine pyrophosphate (HMP-PP) to form thiamine monophosphate (TMP). In Alcanivorax borkumensis (strain ATCC 700651 / DSM 11573 / NCIMB 13689 / SK2), this protein is Thiamine-phosphate synthase.